A 299-amino-acid polypeptide reads, in one-letter code: Peroxisomal biogenesis factor 19 (299 aa).

Positions 1–63 are disordered; sequence MAAAEGDGGV…SPGDTAKDAL (63 aa). N-acetylalanine is present on alanine 2. A docking to the peroxisome membrane and binding to PEX3 region spans residues 2 to 56; sequence AAAEGDGGVRAEADRELEELLESALDDFDKAKPSPAPPPTTTAPDASGPQKRSPG. The interval 2-91 is necessary for PEX19 function on peroxisome biogenesis; that stretch reads AAAEGDGGVR…QATAEFEKAM (90 aa). Acidic residues predominate over residues 16-27; that stretch reads RELEELLESALD. Serine 35, serine 54, and serine 66 each carry phosphoserine. A Phosphothreonine modification is found at threonine 236. At cysteine 296 the chain carries Cysteine methyl ester. Residue cysteine 296 is the site of S-farnesyl cysteine attachment. A propeptide spans 297–299 (removed in mature form); sequence LIM.

The protein belongs to the peroxin-19 family. In terms of assembly, interacts with a broad range of peroxisomal membrane proteins, including PEX3, PEX10, PEX11A, PEX11B, PEX12, PEX13, PEX14 and PEX16, PXMP2/PMP22, PXMP4/PMP24, SLC25A17/PMP34, ABCD1/ALDP, ABCD2/ALDRP, and ABCD3/PMP70. Also interacts with the tumor suppressor CDKN2A/p19ARF.

It localises to the cytoplasm. The protein resides in the peroxisome membrane. Necessary for early peroxisomal biogenesis. Acts both as a cytosolic chaperone and as an import receptor for peroxisomal membrane proteins (PMPs). Binds and stabilizes newly synthesized PMPs in the cytoplasm by interacting with their hydrophobic membrane-spanning domains, and targets them to the peroxisome membrane by binding to the integral membrane protein PEX3. Excludes CDKN2A from the nucleus and prevents its interaction with MDM2, which results in active degradation of TP53. This is Peroxisomal biogenesis factor 19 (PEX19) from Bos taurus (Bovine).